The chain runs to 257 residues: 8-demethyl-8-aminoriboflavin-5'-phosphate synthase (257 aa).

FMN contacts are provided by residues 11–13 (TLR), 19–21 (SQT), 91–94 (ITLN), 132–136 (CGNED), and Y240.

It belongs to the SsuE family. In terms of assembly, homotetramer.

The enzyme catalyses FMN + L-glutamate + 3 A + O2 + H2O = 8-amino-8-demethylriboflavin 5'-phosphate + 2-oxoglutarate + 3 AH2 + CO2 + H(+). The protein operates within antibiotic biosynthesis. Its function is as follows. Involved in the biosynthesis of the riboflavin analog antibiotic roseoflavin (3,8-dimethylamino-riboflavin). Catalyzes the site-specific substitution of the C-8 methyl group of riboflavin-5'-phosphate (FMN) by an amino group to yield 8-amino-8-demethylriboflavin 5'-phosphate, via a combined oxidation, decarboxylation and transamination reaction. The catalysis is initiated by an oxidation step in which the C-8 methyl group on the dimethylbenzene ring of FMN is converted to a formyl group to yield the 8-demethyl-8-formylriboflavin-5'-phosphate (OHC-RP) intermediate. In the presence of thiamine, the formyl group is oxidized into a carboxyl group to yield the 8-demethyl-8-carboxyriboflavin-5'-phosphate (HO2C-RP) intermediate. Finally, in the presence of L-glutamate as an amino donor, decarboxylation and aminotransfer occur, resulting in production of 8-demethyl-8-aminoriboflavin-5'-phosphate. Addition of NAD (but not NADP) to the reaction increases the yield 1.7-fold. The reaction also proceeds without the addition of any electron acceptor, and it is possible that molecular oxygen serves this role. The polypeptide is 8-demethyl-8-aminoriboflavin-5'-phosphate synthase (Streptomyces davaonensis (strain DSM 101723 / JCM 4913 / KCC S-0913 / 768)).